A 352-amino-acid polypeptide reads, in one-letter code: Hematopoietic SH2 domain-containing protein (352 aa).

In terms of domain architecture, SH2 spans Trp-34–Cys-125. Disordered stretches follow at residues Glu-157–Thr-199 and Val-241–Cys-352. The span at Arg-180–Pro-191 shows a compositional bias: polar residues. Residues Pro-283–Arg-295 show a composition bias toward basic and acidic residues. The span at Gln-343–Cys-352 shows a compositional bias: pro residues.

In terms of assembly, interacts with FES and TNK2. In terms of processing, may be phosphorylated by FES and ACK1. In terms of tissue distribution, predominantly expressed in spleen and hematopoietic cells such as peripheral blood leukocytes and weakly expressed in prostate, thymus, heart, small intestine and placenta.

It localises to the cytoplasm. The protein localises to the nucleus. Functionally, may be a modulator of the apoptotic response through its ability to affect mitochondrial stability. Adapter protein involved in tyrosine kinase and CD28 signaling. Seems to affect CD28-mediated activation of the RE/AP element of the interleukin-2 promoter. The polypeptide is Hematopoietic SH2 domain-containing protein (HSH2D) (Homo sapiens (Human)).